The following is a 285-amino-acid chain: Transcription initiation factor IIE subunit beta (285 aa).

Polar residues-rich tracts occupy residues 1–10 (MSSLSDQLSS) and 33–44 (TPTAYLNSNDGH). The segment at 1–56 (MSSLSDQLSSFKKKVANQPIYAKPQPRQPASPTPTAYLNSNDGHSSAASSPGSYSL) is disordered. The span at 45–55 (SSAASSPGSYS) shows a compositional bias: low complexity. Positions 67 to 142 (YSQPADSGVG…FTFKPLHNIR (76 aa)) form a DNA-binding region, TFIIE beta. A disordered region spans residues 240–272 (PTSVDPSTVKRAGHNQTPKQKKPKTRRGKITNT). Positions 258–268 (KQKKPKTRRGK) are enriched in basic residues.

Belongs to the TFIIE beta subunit family. TFIIE is a tetramer of two alpha (tfa1) and two beta (tfa2) subunits. TFIIE associates with RNA polymerase II via the beta subunit.

Its subcellular location is the nucleus. In terms of biological role, recruits TFIIH to the initiation complex and stimulates the RNA polymerase II C-terminal domain kinase and DNA-dependent ATPase activities of TFIIH. Both TFIIH and TFIIE are required for promoter clearance by RNA polymerase. The polypeptide is Transcription initiation factor IIE subunit beta (tfa2) (Schizosaccharomyces pombe (strain 972 / ATCC 24843) (Fission yeast)).